Consider the following 443-residue polypeptide: Citrate transporter CitP (443 aa).

13 helical membrane-spanning segments follow: residues 27 to 47, 59 to 79, 83 to 103, 114 to 134, 151 to 171, 177 to 197, 209 to 229, 268 to 288, 294 to 314, 322 to 342, 350 to 370, 388 to 410, and 422 to 442; these read ISGIGLVRYAFMAVLLIIAIS, IFALVLMGHVFYYLGAHLPIF, LGGGSVFTILLTAILVATNVM, FINGMDFLGLYIVSLIASSLF, VAFISMALTAVVIGIVGVIIG, AILYIAMPIMAGGVGAGIVPL, SAGILSKLFPTVILGNLLAII, YVQLGVGLIIAVMFFMIGTML, GINAYAFIILSIVLTKAFGLL, VIMFGQVIVKNMTHALLAGVG, VLLAALSWQFVVLCLVSIVAI, AAITAGLANNSMGGTGNVAVLAA, and MGNRIGGALILVVAGILVTFM.

Belongs to the 2-hydroxycarboxylate transporter (2-HCT) (TC 2.A.24) family.

It localises to the cell membrane. The catalysed reaction is (R)-lactate(in) + citrate(out) = (R)-lactate(out) + citrate(in). It catalyses the reaction (S)-lactate(in) + citrate(out) = (S)-lactate(out) + citrate(in). It carries out the reaction citrate(in) + H(+)(in) = citrate(out) + H(+)(out). Uptake of citrate is not affected by the absence or presence of Na(+) up to 25 mM and is increasingly inhibited by increasing Mg(2+) concentrations. In terms of biological role, secondary transporter involved in citrate metabolism. During cometabolism of citrate and glucose, catalyzes the uptake of divalent citrate into the cell coupled to the exit of monovalent lactate, a product of citrate fermentation during citrate-glucose cometabolism (precursor/product exchange). The citrate/lactate exchange is electrogenic and results in the generation of a membrane potential. In the absence of glucose, i.e. when no lactate is produced, CitP catalyzes the proton-dependent transport of citrate and malate. Transports the divalent form of citrate and malate with the concomitant uptake of one proton, therefore translocating a single unit of negative charge across the membrane. In vitro, transports a range of substrates that contain the 2-hydroxycarboxylate motif, HO-CR(2)-COO(-), with a preference for malate, citrate and monovalent 2-hydroxyisobutyrate. Modification of the OH or the COO(-) groups of the 2-hydroxycarboxylate motif drastically reduces the affinity of the transporter for the substrates, indicating their relevance in substrate recognition. Significant activity is also observed with some 2-oxocarboxylates and a 3-hydroxycarboxylate. The sequence is that of Citrate transporter CitP from Leuconostoc mesenteroides subsp. mesenteroides.